Reading from the N-terminus, the 428-residue chain is Gamma-glutamyl phosphate reductase (428 aa).

This sequence belongs to the gamma-glutamyl phosphate reductase family.

The protein localises to the cytoplasm. It catalyses the reaction L-glutamate 5-semialdehyde + phosphate + NADP(+) = L-glutamyl 5-phosphate + NADPH + H(+). Its pathway is amino-acid biosynthesis; L-proline biosynthesis; L-glutamate 5-semialdehyde from L-glutamate: step 2/2. Catalyzes the NADPH-dependent reduction of L-glutamate 5-phosphate into L-glutamate 5-semialdehyde and phosphate. The product spontaneously undergoes cyclization to form 1-pyrroline-5-carboxylate. The chain is Gamma-glutamyl phosphate reductase from Streptomyces coelicolor (strain ATCC BAA-471 / A3(2) / M145).